The chain runs to 290 residues: Acetylglutamate kinase (290 aa).

Residues glycine 65–glycine 66, arginine 87, and asparagine 186 each bind substrate.

Belongs to the acetylglutamate kinase family. ArgB subfamily.

It localises to the cytoplasm. It carries out the reaction N-acetyl-L-glutamate + ATP = N-acetyl-L-glutamyl 5-phosphate + ADP. It participates in amino-acid biosynthesis; L-arginine biosynthesis; N(2)-acetyl-L-ornithine from L-glutamate: step 2/4. Functionally, catalyzes the ATP-dependent phosphorylation of N-acetyl-L-glutamate. The protein is Acetylglutamate kinase of Mycobacterium sp. (strain JLS).